Here is a 686-residue protein sequence, read N- to C-terminus: Mitochondrial Rho GTPase 1 (686 aa).

Topologically, residues Met-1–Arg-648 are cytoplasmic. The Miro 1 domain maps to Arg-4–His-172. GTP is bound by residues Gly-13 to Ser-20, Asp-59 to Asn-63, and Asn-117 to Asp-120. 2 EF-hand domains span residues Lys-188–Thr-223 and Leu-341–Asn-376. 8 residues coordinate Ca(2+): Asp-201, Asp-203, Asp-205, Glu-212, Asp-354, Asp-356, Asp-358, and Glu-365. The Miro 2 domain occupies Arg-455–Asp-624. Residues Gly-464 to Thr-471, Glu-506 to Val-510, and Thr-574 to Asp-577 each bind GTP. Residues Trp-649 to Lys-665 form a helical; Anchor for type IV membrane protein membrane-spanning segment. Over Trp-666–Thr-686 the chain is Mitochondrial intermembrane.

This sequence belongs to the mitochondrial Rho GTPase family.

It localises to the mitochondrion outer membrane. Mitochondrial GTPase involved in mitochondrial trafficking. Probably involved in control of anterograde transport of mitochondria and their subcellular distribution. This chain is Mitochondrial Rho GTPase 1 (GEM1), found in Cryptococcus neoformans var. neoformans serotype D (strain B-3501A) (Filobasidiella neoformans).